The primary structure comprises 200 residues: Phosphoheptose isomerase (200 aa).

Positions 37-199 constitute an SIS domain; it reads VLGCITAGGK…DVQLLGEQDL (163 aa). Residue 52–54 participates in substrate binding; it reads NGG. 2 residues coordinate Zn(2+): His61 and Glu65. Substrate is bound by residues Glu65, 94-95, 120-122, Ser125, and Gln175; these read ND and TTS. Zn(2+) is bound by residues Gln175 and His183.

Belongs to the SIS family. GmhA subfamily. In terms of assembly, homotetramer. Requires Zn(2+) as cofactor.

Its subcellular location is the cytoplasm. The catalysed reaction is 2 D-sedoheptulose 7-phosphate = D-glycero-alpha-D-manno-heptose 7-phosphate + D-glycero-beta-D-manno-heptose 7-phosphate. The protein operates within carbohydrate biosynthesis; D-glycero-D-manno-heptose 7-phosphate biosynthesis; D-glycero-alpha-D-manno-heptose 7-phosphate and D-glycero-beta-D-manno-heptose 7-phosphate from sedoheptulose 7-phosphate: step 1/1. Catalyzes the isomerization of sedoheptulose 7-phosphate in D-glycero-D-manno-heptose 7-phosphate. The protein is Phosphoheptose isomerase of Methylibium petroleiphilum (strain ATCC BAA-1232 / LMG 22953 / PM1).